The sequence spans 406 residues: DNA primase DnaG (406 aa).

The region spanning 167-253 (DAVVIVEGRA…CVEDLSRRTV (87 aa)) is the Toprim domain. Residues glutamate 173, aspartate 215, and aspartate 217 each contribute to the Mg(2+) site. The segment at 259-309 (NKTPASAAAPIATTQSETAATDGSATPAPTPEPAPDTAPSPDSDGDDTEAA) is disordered. Residues 261 to 272 (TPASAAAPIATT) are compositionally biased toward low complexity. A compositionally biased stretch (pro residues) spans 286–296 (APTPEPAPDTA).

Belongs to the archaeal DnaG primase family. Forms a ternary complex with MCM helicase and DNA. The cofactor is Mg(2+).

The enzyme catalyses ssDNA + n NTP = ssDNA/pppN(pN)n-1 hybrid + (n-1) diphosphate.. In terms of biological role, RNA polymerase that catalyzes the synthesis of short RNA molecules used as primers for DNA polymerase during DNA replication. The protein is DNA primase DnaG of Halobacterium salinarum (strain ATCC 29341 / DSM 671 / R1).